Consider the following 192-residue polypeptide: Small ribosomal subunit protein eS7 (192 aa).

It belongs to the eukaryotic ribosomal protein eS7 family.

This Secale cereale (Rye) protein is Small ribosomal subunit protein eS7 (RPS7).